The following is a 166-amino-acid chain: Lipoprotein signal peptidase (166 aa).

Helical transmembrane passes span 12–32 (WLWL…LILQ), 70–90 (WFFA…MYRS), and 102–122 (ALII…GFVV). Residues Asp-123 and Asp-141 contribute to the active site. A helical transmembrane segment spans residues 137 to 157 (FNLADTAICIGAALIVLEGFL).

This sequence belongs to the peptidase A8 family.

The protein resides in the cell inner membrane. It catalyses the reaction Release of signal peptides from bacterial membrane prolipoproteins. Hydrolyzes -Xaa-Yaa-Zaa-|-(S,diacylglyceryl)Cys-, in which Xaa is hydrophobic (preferably Leu), and Yaa (Ala or Ser) and Zaa (Gly or Ala) have small, neutral side chains.. The protein operates within protein modification; lipoprotein biosynthesis (signal peptide cleavage). Functionally, this protein specifically catalyzes the removal of signal peptides from prolipoproteins. The chain is Lipoprotein signal peptidase from Salmonella typhi.